The sequence spans 118 residues: Integration host factor subunit alpha (118 aa).

Residues 97-118 form a disordered region; sequence NGAMPMSTEESDENTAQSASGG.

This sequence belongs to the bacterial histone-like protein family. As to quaternary structure, heterodimer of an alpha and a beta chain.

This protein is one of the two subunits of integration host factor, a specific DNA-binding protein that functions in genetic recombination as well as in transcriptional and translational control. This Rhodopseudomonas palustris (strain ATCC BAA-98 / CGA009) protein is Integration host factor subunit alpha.